Consider the following 202-residue polypeptide: 3-isopropylmalate dehydratase small subunit (202 aa).

Belongs to the LeuD family. LeuD type 1 subfamily. As to quaternary structure, heterodimer of LeuC and LeuD.

The enzyme catalyses (2R,3S)-3-isopropylmalate = (2S)-2-isopropylmalate. It participates in amino-acid biosynthesis; L-leucine biosynthesis; L-leucine from 3-methyl-2-oxobutanoate: step 2/4. Catalyzes the isomerization between 2-isopropylmalate and 3-isopropylmalate, via the formation of 2-isopropylmaleate. The chain is 3-isopropylmalate dehydratase small subunit from Rhizobium rhizogenes (strain K84 / ATCC BAA-868) (Agrobacterium radiobacter).